Consider the following 341-residue polypeptide: Shk1 kinase-binding protein 15 (341 aa).

WD repeat units lie at residues 33-70 (AHEG…QIAD), 77-114 (IANA…LVHT), 119-157 (SHKG…GGKV), 197-234 (SSKS…ILHE), and 237-274 (AHKK…VIEH). The interval 293-341 (NSEPKNVEDEAAKRQSLDSETSETSSESESESEYYSTSKQPPVKRTKHA) is disordered. The span at 297 to 309 (KNVEDEAAKRQSL) shows a compositional bias: basic and acidic residues.

Negatively regulates pak1/shk1 kinase activity leading to proper execution of cytoskeletal remodeling and cytokinetic functions. In terms of biological role, interacts with pak1/shk1. The sequence is that of Shk1 kinase-binding protein 15 (skb15) from Schizosaccharomyces pombe (strain 972 / ATCC 24843) (Fission yeast).